The primary structure comprises 358 residues: Peptide chain release factor 1 (358 aa).

Q233 is subject to N5-methylglutamine.

This sequence belongs to the prokaryotic/mitochondrial release factor family. Post-translationally, methylated by PrmC. Methylation increases the termination efficiency of RF1.

The protein resides in the cytoplasm. Functionally, peptide chain release factor 1 directs the termination of translation in response to the peptide chain termination codons UAG and UAA. This chain is Peptide chain release factor 1, found in Macrococcus caseolyticus (strain JCSC5402) (Macrococcoides caseolyticum).